The chain runs to 740 residues: Polyribonucleotide nucleotidyltransferase (740 aa).

Residues Asp-492 and Asp-498 each contribute to the Mg(2+) site. The KH domain occupies 559–618 (PMVQTLEIQKEKIRDVIGLGGKVIKELCKTFDVEIDISENGEVKVWGNVGENVKKAVQSI). The S1 motif domain maps to 628-696 (GDIFDGEVVK…HKNRVKLTLR (69 aa)).

This sequence belongs to the polyribonucleotide nucleotidyltransferase family. Mg(2+) is required as a cofactor.

It localises to the cytoplasm. It catalyses the reaction RNA(n+1) + phosphate = RNA(n) + a ribonucleoside 5'-diphosphate. In terms of biological role, involved in mRNA degradation. Catalyzes the phosphorolysis of single-stranded polyribonucleotides processively in the 3'- to 5'-direction. The protein is Polyribonucleotide nucleotidyltransferase of Orientia tsutsugamushi (strain Boryong) (Rickettsia tsutsugamushi).